The primary structure comprises 264 residues: MVTMKDLLECGVHFGHQTRRWNPKTKKFIFGVRKNIHIIDLQKTLRYFRYTYNIVRDASAQGKSIMFVGTKKQANETLKEFAESIQVPYVNYRWLGGMLTNFSTIRKSVRKLEIIEEMENSGQIDLLTKKEKLMILRKKEKLDKYLGGVRHMKKIPDMIFVIDVAKEKIAVAEARKLHIPIVAPLDTNCDPDLVDYPIPGNDDAIRSIRLFCKEMSEAILEGRELMQEEIVHANENSEEIEYVSHEEKEEMLAEIQKEITQGAE.

The protein belongs to the universal ribosomal protein uS2 family.

In Helicobacter pylori (strain ATCC 700392 / 26695) (Campylobacter pylori), this protein is Small ribosomal subunit protein uS2 (rpsB).